The primary structure comprises 279 residues: Methyltransferase ausD (279 aa).

S-adenosyl-L-methionine contacts are provided by residues D124–L125, D152–I153, and R244.

Belongs to the class I-like SAM-binding methyltransferase superfamily. As to quaternary structure, homodimer.

It participates in secondary metabolite biosynthesis; terpenoid biosynthesis. Its function is as follows. Methyltransferase; part of the gene cluster that mediates the biosynthesis of calidodehydroaustin, a fungal meroterpenoid. The first step of the pathway is the synthesis of 3,5-dimethylorsellinic acid by the polyketide synthase ausA. 3,5-dimethylorsellinic acid is then prenylated by the polyprenyl transferase ausN. Further epoxidation by the FAD-dependent monooxygenase ausM and cyclization by the probable terpene cyclase ausL lead to the formation of protoaustinoid A. Protoaustinoid A is then oxidized to spiro-lactone preaustinoid A3 by the combined action of the FAD-binding monooxygenases ausB and ausC, and the dioxygenase ausE. Acid-catalyzed keto-rearrangement and ring contraction of the tetraketide portion of preaustinoid A3 by ausJ lead to the formation of preaustinoid A4. The aldo-keto reductase ausK, with the help of ausH, is involved in the next step by transforming preaustinoid A4 into isoaustinone which is in turn hydroxylated by the P450 monooxygenase ausI to form austinolide. The cytochrome P450 monooxygenase ausG modifies austinolide to austinol. Austinol is further acetylated to austin by the O-acetyltransferase ausP, which spontaneously changes to dehydroaustin. The cytochrome P450 monooxygenase ausR then converts dehydroaustin is into 7-dehydrodehydroaustin. The hydroxylation catalyzed by ausR permits the O-acetyltransferase ausQ to add an additional acetyl group to the molecule, leading to the formation of acetoxydehydroaustin. The short chain dehydrogenase ausT catalyzes the reduction of the double bond present between carbon atoms 1 and 2 to convert 7-dehydrodehydroaustin into 1,2-dihydro-7-hydroxydehydroaustin. AusQ catalyzes not only an acetylation reaction but also the addition of the PKS ausV diketide product to 1,2-dihydro-7-hydroxydehydroaustin, forming precalidodehydroaustin. Finally, the iron/alpha-ketoglutarate-dependent dioxygenase converts precalidodehydroaustin into calidodehydroaustin. The polypeptide is Methyltransferase ausD (Aspergillus calidoustus).